A 279-amino-acid chain; its full sequence is DegV domain-containing protein CA_C0701 (279 aa).

The 274-residue stretch at 4 to 277 (IKIVTDSTCD…TKACGVFFIE (274 aa)) folds into the DegV domain. Thr-62 and Ser-94 together coordinate hexadecanoate.

Functionally, may bind long-chain fatty acids, such as palmitate, and may play a role in lipid transport or fatty acid metabolism. This chain is DegV domain-containing protein CA_C0701, found in Clostridium acetobutylicum (strain ATCC 824 / DSM 792 / JCM 1419 / IAM 19013 / LMG 5710 / NBRC 13948 / NRRL B-527 / VKM B-1787 / 2291 / W).